Reading from the N-terminus, the 227-residue chain is Bone marrow proteoglycan (227 aa).

A signal peptide spans 1 to 16 (MKFPLLLALLVGGAFA). The propeptide at 17-110 (LHLSSEASDS…TSLMGDSGFK (94 aa)) is acidic. Residues 21-105 (SEASDSKSPL…KEEDTTSLMG (85 aa)) are disordered. O-linked (GalNAc...) serine glycosylation occurs at S24. Over residues 34–46 (SLPREAEISRPEV) the composition is skewed to basic and acidic residues. Positions 58-70 (LEEEEEEEEEEGS) are enriched in acidic residues. An O-linked (Xyl...) (chondroitin sulfate) serine glycan is attached at S70. One can recognise a C-type lectin domain in the interval 128-227 (LVCRSCYRGT…GKRRPFICAY (100 aa)). 2 disulfide bridges follow: C130/C225 and C202/C217.

Nitrated.

The protein localises to the secreted. Cytotoxin and helminthotoxin. MBP also induces non-cytolytic histamine release from basophils. It is involved in antiparasitic defense mechanisms and immune hypersensitivity reactions. This Rattus norvegicus (Rat) protein is Bone marrow proteoglycan (Prg2).